Here is a 178-residue protein sequence, read N- to C-terminus: Ribulose bisphosphate carboxylase small subunit, chloroplastic 4 (178 aa).

Residues 1–54 (MASISSTVATVSRAAPAQANMVAPFTGLKSNAAFPATKKANDFSTLPSNGGRVQ) constitute a chloroplast transit peptide.

This sequence belongs to the RuBisCO small chain family. As to quaternary structure, heterohexadecamer of 8 large and 8 small subunits.

It is found in the plastid. The protein resides in the chloroplast. Its function is as follows. RuBisCO catalyzes two reactions: the carboxylation of D-ribulose 1,5-bisphosphate, the primary event in carbon dioxide fixation, as well as the oxidative fragmentation of the pentose substrate. Both reactions occur simultaneously and in competition at the same active site. Although the small subunit is not catalytic it is essential for maximal activity. This is Ribulose bisphosphate carboxylase small subunit, chloroplastic 4 from Flaveria pringlei.